A 419-amino-acid chain; its full sequence is Transcription termination factor Rho (419 aa).

The region spanning 48 to 123 (EISGDGVLEI…LKVDSINFDR (76 aa)) is the Rho RNA-BD domain. 3 RNA-binding regions span residues 61–66 (GFGFLR), 78–80 (DIY), and 108–110 (ERY). ATP is bound by residues 169 to 174 (GKGQRG), 181 to 186 (KAGKTI), and Arg212. Residues 284-288 (VLTGG) are RNA-binding 2.

It belongs to the Rho family. In terms of assembly, homohexamer. The homohexamer assembles into an open ring structure.

Functionally, facilitates transcription termination by a mechanism that involves Rho binding to the nascent RNA, activation of Rho's RNA-dependent ATPase activity, and release of the mRNA from the DNA template. The sequence is that of Transcription termination factor Rho from Pseudomonas aeruginosa (strain ATCC 15692 / DSM 22644 / CIP 104116 / JCM 14847 / LMG 12228 / 1C / PRS 101 / PAO1).